Reading from the N-terminus, the 376-residue chain is Biotin synthase (376 aa).

A Radical SAM core domain is found at Asn-68 to Ser-292. Residues Cys-83, Cys-87, and Cys-90 each coordinate [4Fe-4S] cluster. Cys-129, Cys-160, Cys-220, and Arg-296 together coordinate [2Fe-2S] cluster.

Belongs to the radical SAM superfamily. Biotin synthase family. Homodimer. Requires [4Fe-4S] cluster as cofactor. It depends on [2Fe-2S] cluster as a cofactor.

It carries out the reaction (4R,5S)-dethiobiotin + (sulfur carrier)-SH + 2 reduced [2Fe-2S]-[ferredoxin] + 2 S-adenosyl-L-methionine = (sulfur carrier)-H + biotin + 2 5'-deoxyadenosine + 2 L-methionine + 2 oxidized [2Fe-2S]-[ferredoxin]. It participates in cofactor biosynthesis; biotin biosynthesis; biotin from 7,8-diaminononanoate: step 2/2. Catalyzes the conversion of dethiobiotin (DTB) to biotin by the insertion of a sulfur atom into dethiobiotin via a radical-based mechanism. The polypeptide is Biotin synthase (Psychrobacter cryohalolentis (strain ATCC BAA-1226 / DSM 17306 / VKM B-2378 / K5)).